The chain runs to 151 residues: Probable transcriptional regulator syrB3 (151 aa).

The segment at 1 to 65 (MVDESNAGPV…QERSEKLRLI (65 aa)) is disordered. A compositionally biased stretch (low complexity) spans 7–23 (AGPVAPAVVADAEVKAP). The segment covering 52-65 (GYSEQERSEKLRLI) has biased composition (basic and acidic residues).

It belongs to the SyrB family.

This Rhizobium meliloti (strain 1021) (Ensifer meliloti) protein is Probable transcriptional regulator syrB3 (syrB3).